The chain runs to 86 residues: Large ribosomal subunit protein bL27 (86 aa).

The disordered stretch occupies residues 1 to 24 (MAHKKGTGSTRNGRDSNSKRLGVK).

The protein belongs to the bacterial ribosomal protein bL27 family.

In Prochlorococcus marinus (strain AS9601), this protein is Large ribosomal subunit protein bL27.